Consider the following 252-residue polypeptide: Probable aquaporin TIP1-2 (252 aa).

The next 2 helical transmembrane spans lie at 24–44 (VAEF…GMAF) and 57–77 (GLIA…AVGA). Positions 85-87 (NPA) match the NPA 1 motif. Helical transmembrane passes span 115 to 137 (VVAC…SLSA), 144 to 164 (AVVF…ATAV), and 173 to 193 (VIAP…GGAF). The short motif at 199-201 (NPA) is the NPA 2 element. Residues 220-240 (WLGPFVGAAIAALIYDIIFIG) traverse the membrane as a helical segment.

This sequence belongs to the MIP/aquaporin (TC 1.A.8) family. TIP (TC 1.A.8.10) subfamily. As to expression, expressed in leaves.

It localises to the vacuole membrane. Its function is as follows. Aquaporins facilitate the transport of water and small neutral solutes across cell membranes. May be involved in transport from the vacuolar compartment to the cytoplasm. This chain is Probable aquaporin TIP1-2 (TIP1-2), found in Oryza sativa subsp. japonica (Rice).